Reading from the N-terminus, the 236-residue chain is CD81 protein (236 aa).

Topologically, residues 1–12 (MGVEGCTKCIKY) are cytoplasmic. A helical membrane pass occupies residues 13 to 33 (LLFVFNFVFWLAGGVILGVAL). Residues 34–63 (WLRHDPQTTNLLYLELGDKPAPNTFYVGIY) lie on the Extracellular side of the membrane. Residues 64-84 (ILIAVGAVMMFVGFLGCYGAI) traverse the membrane as a helical segment. Residues 85–89 (QESQC) are Cytoplasmic-facing. Residues 90-112 (LLGTFFTCLVILFACEVAAGIWG) form a helical membrane-spanning segment. Over 113–201 (FVNKDQIAKD…QKIDELFSGK (89 aa)) the chain is Extracellular. 2 cysteine pairs are disulfide-bonded: Cys-156/Cys-190 and Cys-157/Cys-175. The helical transmembrane segment at 202 to 224 (LYLIGIAAIVVAVIMIFEMILSM) threads the bilayer. Glu-219 is a binding site for cholesterol. Residues 225 to 236 (VLCCGIRNSSVY) lie on the Cytoplasmic side of the membrane.

It belongs to the tetraspanin (TM4SF) family. In terms of assembly, homodimer. Part of a complex composed of CD19, CR2/CD21, CD81 and IFITM1/CD225 in the membrane of mature B cells. Interacts (via the second extracellular domain) with CD19; this interaction is initiated early during biosynthesis in the ER and enables trafficking of only properly folded CD19. Part of a complex that includes MHC class II/HLA-DR molecules and IFITM1. Interacts with IFITM1. Interacts with IFITM2 and IFITM3. Part of integrin-tetraspanin complex composed of CD9, CD81, beta-1 and beta-2 integrins in the membrane of monocyte/macrophages. Interacts (via the second extracellular domain) with integrin ITGAV:ITGB3. Interacts with CD247/CD3 zeta, ICAM1 and CD9 at the immune synapse on T cell membrane. Part of a GPCR-tetraspanin complex consisting at least of ADGRG1, CD81, possibly CD9, and GNA11 in which CD81 enhances the association of ADGRG1 with GNA11. Part of a complex composed of CD9, CD81, PTGFRN and IGSF8. Interacts directly with IGSF8. Interacts with CD53 and SCIMP. Interacts with SAMHD1 (via its C-terminus). Interacts with glypican GPC3 and with the transcriptional repressor HHEX; binding to GPC3 decreases the availability of free CD81 for binding to HHEX, resulting in nuclear translocation of HHEX and transcriptional repression. Interacts with CLDN1. Interacts with CLDN6 and CLDN9. Post-translationally, not glycosylated. In terms of processing, likely constitutively palmitoylated at low levels. Protein palmitoylation is up-regulated upon coligation of BCR and CD9-C2R-CD81 complexes in lipid rafts.

Its subcellular location is the cell membrane. It is found in the basolateral cell membrane. Its function is as follows. Structural component of specialized membrane microdomains known as tetraspanin-enriched microdomains (TERMs), which act as platforms for receptor clustering and signaling. Essential for trafficking and compartmentalization of CD19 receptor on the surface of activated B cells. Upon initial encounter with microbial pathogens, enables the assembly of CD19-CR2/CD21 and B cell receptor (BCR) complexes at signaling TERMs, lowering the threshold dose of antigen required to trigger B cell clonal expansion and antibody production. In T cells, facilitates the localization of CD247/CD3 zeta at antigen-induced synapses with B cells, providing for costimulation and polarization toward T helper type 2 phenotype. Present in MHC class II compartments, may also play a role in antigen presentation. Can act both as positive and negative regulator of homotypic or heterotypic cell-cell fusion processes. Positively regulates sperm-egg fusion and may be involved in acrosome reaction. In myoblasts, associates with CD9 and PTGFRN and inhibits myotube fusion during muscle regeneration. In macrophages, associates with CD9 and beta-1 and beta-2 integrins, and prevents macrophage fusion into multinucleated giant cells specialized in ingesting complement-opsonized large particles. Also prevents the fusion of mononuclear cell progenitors into osteoclasts in charge of bone resorption. May regulate the compartmentalization of enzymatic activities. In T cells, defines the subcellular localization of dNTPase SAMHD1 and permits its degradation by the proteasome, thereby controlling intracellular dNTP levels. Also involved in cell adhesion and motility. Positively regulates integrin-mediated adhesion of macrophages, particularly relevant for the inflammatory response in the lung. The sequence is that of CD81 protein (CD81) from Saguinus oedipus (Cotton-top tamarin).